Reading from the N-terminus, the 283-residue chain is Pantothenate synthetase (283 aa).

Met30 to His37 is a binding site for ATP. The Proton donor role is filled by His37. Gln61 serves as a coordination point for (R)-pantoate. Gln61 contributes to the beta-alanine binding site. Position 147 to 150 (Gly147 to Asp150) interacts with ATP. Gln153 contacts (R)-pantoate. Residues Val176 and Met184–Arg187 each bind ATP.

Belongs to the pantothenate synthetase family. Homodimer.

It is found in the cytoplasm. It carries out the reaction (R)-pantoate + beta-alanine + ATP = (R)-pantothenate + AMP + diphosphate + H(+). It functions in the pathway cofactor biosynthesis; (R)-pantothenate biosynthesis; (R)-pantothenate from (R)-pantoate and beta-alanine: step 1/1. In terms of biological role, catalyzes the condensation of pantoate with beta-alanine in an ATP-dependent reaction via a pantoyl-adenylate intermediate. The polypeptide is Pantothenate synthetase (Nitratidesulfovibrio vulgaris (strain ATCC 29579 / DSM 644 / CCUG 34227 / NCIMB 8303 / VKM B-1760 / Hildenborough) (Desulfovibrio vulgaris)).